The primary structure comprises 218 residues: Large ribosomal subunit protein uL4 (218 aa).

Positions 46–100 (ARQGTHSTKTRAEVRGGGRKPFRQKGTGRARQGSIRAPHFTGGGISHGPKPRDYA) are disordered. Residues 62 to 73 (GGRKPFRQKGTG) show a composition bias toward basic residues.

Belongs to the universal ribosomal protein uL4 family. Part of the 50S ribosomal subunit.

One of the primary rRNA binding proteins, this protein initially binds near the 5'-end of the 23S rRNA. It is important during the early stages of 50S assembly. It makes multiple contacts with different domains of the 23S rRNA in the assembled 50S subunit and ribosome. In terms of biological role, forms part of the polypeptide exit tunnel. The sequence is that of Large ribosomal subunit protein uL4 from Corynebacterium efficiens (strain DSM 44549 / YS-314 / AJ 12310 / JCM 11189 / NBRC 100395).